The chain runs to 968 residues: RNA polymerase-associated protein RapA (968 aa).

The Helicase ATP-binding domain occupies 163–332; the sequence is EVGRRYAPRV…FARLRLLDPD (170 aa). 176–183 contributes to the ATP binding site; the sequence is DEVGLGKT. The DEAH box signature appears at 278-281; it reads DEAH. Residues 491 to 643 enclose the Helicase C-terminal domain; it reads RVDWLIAFLK…ELTCPSGHVL (153 aa).

Belongs to the SNF2/RAD54 helicase family. RapA subfamily. Interacts with the RNAP. Has a higher affinity for the core RNAP than for the holoenzyme. Its ATPase activity is stimulated by binding to RNAP.

Functionally, transcription regulator that activates transcription by stimulating RNA polymerase (RNAP) recycling in case of stress conditions such as supercoiled DNA or high salt concentrations. Probably acts by releasing the RNAP, when it is trapped or immobilized on tightly supercoiled DNA. Does not activate transcription on linear DNA. Probably not involved in DNA repair. This chain is RNA polymerase-associated protein RapA, found in Shewanella putrefaciens (strain CN-32 / ATCC BAA-453).